We begin with the raw amino-acid sequence, 391 residues long: Isocitrate dehydrogenase [NADP] (391 aa).

5 residues coordinate D-threo-isocitrate: serine 102, asparagine 104, arginine 108, arginine 118, and arginine 142. Aspartate 283 provides a ligand contact to Mg(2+).

The protein belongs to the isocitrate and isopropylmalate dehydrogenases family. In terms of assembly, homodimer. It depends on Mg(2+) as a cofactor. Mn(2+) is required as a cofactor.

It carries out the reaction D-threo-isocitrate + NADP(+) = 2-oxoglutarate + CO2 + NADPH. Functionally, catalyzes the oxidative decarboxylation of isocitrate to 2-oxoglutarate and carbon dioxide with the concomitant reduction of NADP(+). In Streptococcus salivarius, this protein is Isocitrate dehydrogenase [NADP] (icd).